A 199-amino-acid polypeptide reads, in one-letter code: DnaJ homolog subfamily C member 5B (199 aa).

A phosphoserine mark is found at Ser-14 and Ser-16. The J domain maps to 19 to 84 (ALYEILGLHK…SKRNIYDKYG (66 aa)).

In terms of assembly, interacts with the chaperone complex consisting of HSC70 and SGTA. Post-translationally, palmitoylated.

The protein resides in the membrane. This is DnaJ homolog subfamily C member 5B (DNAJC5B) from Sus scrofa (Pig).